Reading from the N-terminus, the 235-residue chain is Glutathione S-transferase 1 (235 aa).

Residues glutamate 36 to glycine 113 form the GST N-terminal domain. Residues tyrosine 42, tryptophan 73, lysine 77, valine 85, and glutamate 97–serine 98 contribute to the glutathione site. Residues asparagine 115–phenylalanine 235 enclose the GST C-terminal domain.

This sequence belongs to the GST superfamily. As to quaternary structure, homodimer.

It catalyses the reaction RX + glutathione = an S-substituted glutathione + a halide anion + H(+). In Onchocerca volvulus, this protein is Glutathione S-transferase 1 (GST1).